Consider the following 468-residue polypeptide: ATP synthase subunit beta (468 aa).

155–162 provides a ligand contact to ATP; the sequence is GGAGVGKT.

This sequence belongs to the ATPase alpha/beta chains family. As to quaternary structure, F-type ATPases have 2 components, CF(1) - the catalytic core - and CF(0) - the membrane proton channel. CF(1) has five subunits: alpha(3), beta(3), gamma(1), delta(1), epsilon(1). CF(0) has three main subunits: a(1), b(2) and c(9-12). The alpha and beta chains form an alternating ring which encloses part of the gamma chain. CF(1) is attached to CF(0) by a central stalk formed by the gamma and epsilon chains, while a peripheral stalk is formed by the delta and b chains.

Its subcellular location is the cell membrane. The catalysed reaction is ATP + H2O + 4 H(+)(in) = ADP + phosphate + 5 H(+)(out). Produces ATP from ADP in the presence of a proton gradient across the membrane. The catalytic sites are hosted primarily by the beta subunits. The polypeptide is ATP synthase subunit beta (Streptococcus equi subsp. zooepidemicus (strain H70)).